An 869-amino-acid polypeptide reads, in one-letter code: Speckle targeted PIP5K1A-regulated poly(A) polymerase (869 aa).

The Matrin-type zinc finger occupies 16-46 (FRCCLCDVTTANRPSLDAHLKGRKHRDLVQL). Residues 56-128 (RSVFVSGFPR…HGLRVRPREQ (73 aa)) enclose the RRM domain. Residues 114-144 (HSLGGHGLRVRPREQKEFQSPASKSPKGVDS) form a disordered region. S205 provides a ligand contact to ATP. Positions 216 and 218 each coordinate Mg(2+). Residues D216 and D218 each contribute to the UTP site. Disordered stretches follow at residues 226–247 (MEET…LDSA) and 259–335 (CTPA…ASKD). 2 stretches are compositionally biased toward polar residues: residues 266 to 276 (DSLSPTSVQES) and 283 to 299 (TPSS…LGSD). Positions 314-335 (QEDRKEGKQGKELELAEEASKD) are enriched in basic and acidic residues. N395 is a binding site for ATP. UTP-binding residues include N395, R417, Y435, and H552. The 59-residue stretch at 494 to 552 (LSSLLAQFFSCVSCLDLSGSLLSLREGRPLMVAEGLPSDLWEGLRLGPMNLQDPFDLSH) folds into the PAP-associated domain. Residues 601–869 (SSPSSLLSAK…IPQALKNLLK (269 aa)) are KA1; binds the bulging loops of U6 snRNA but is dispensable for terminal uridylyltransferase activity. Disordered stretches follow at residues 640-689 (QGTK…DHSE), 735-757 (MKPE…HPSS), 775-796 (ARRR…TGAE), and 803-822 (RVTQ…PGEP). The segment covering 671–689 (KSFEEGKEEPQGCAGDHSE) has biased composition (basic and acidic residues). A phosphoserine mark is found at S688 and S744.

It belongs to the DNA polymerase type-B-like family. In terms of assembly, associates with the cleavage and polyadenylation specificity factor (CPSF) complex. Interacts with CPSF1 and CPSF3; the interaction is direct. Interacts with PIP5K1A. The cofactor is Mg(2+). Requires Mn(2+) as cofactor. Phosphorylated by CK1 in the proline-rich (Pro-rich) region.

The protein resides in the nucleus. The protein localises to the nucleolus. It is found in the nucleus speckle. It catalyses the reaction RNA(n) + UTP = RNA(n)-3'-uridine ribonucleotide + diphosphate. It carries out the reaction RNA(n) + ATP = RNA(n)-3'-adenine ribonucleotide + diphosphate. Adenylyltransferase activity is specifically phosphatidylinositol 4,5-bisphosphate (PtdIns(4,5)P2). Functionally, poly(A) polymerase that creates the 3'-poly(A) tail of specific pre-mRNAs. Localizes to nuclear speckles together with PIP5K1A and mediates polyadenylation of a select set of mRNAs, such as HMOX1. In addition to polyadenylation, it is also required for the 3'-end cleavage of pre-mRNAs: binds to the 3'UTR of targeted pre-mRNAs and promotes the recruitment and assembly of the CPSF complex on the 3'UTR of pre-mRNAs. In addition to adenylyltransferase activity, also has uridylyltransferase activity. However, the ATP ratio is higher than UTP in cells, suggesting that it functions primarily as a poly(A) polymerase. Acts as a specific terminal uridylyltransferase for U6 snRNA in vitro: responsible for a controlled elongation reaction that results in the restoration of the four 3'-terminal UMP-residues found in newly transcribed U6 snRNA. Not involved in replication-dependent histone mRNA degradation. This is Speckle targeted PIP5K1A-regulated poly(A) polymerase (Tut1) from Mus musculus (Mouse).